The chain runs to 2579 residues: Ectopic P granules protein 5 homolog (2579 aa).

Disordered stretches follow at residues 1–46 (MAEA…SREQ) and 92–132 (NEES…GTKV). The segment covering 7 to 23 (PQRRAKAKASRTKTKEK) has biased composition (basic residues). Basic and acidic residues predominate over residues 24–34 (KKYETPQREES). Threonine 134 bears the Phosphothreonine mark. A disordered region spans residues 535–564 (PSERKPSSSGPGSGTWTLVDEGGEEDEDPE). Positions 555 to 564 (EGGEEDEDPE) are enriched in acidic residues. The stretch at 1607–1633 (MHKNEAISQQLHVLRKEVKQLQAEAAK) forms a coiled coil.

It belongs to the EPG5 family. As to quaternary structure, interacts with RAN.

It localises to the cytoplasm. It is found in the perinuclear region. The protein resides in the lysosome. In terms of biological role, involved in autophagy. May play a role in a late step of autophagy, such as clearance of autophagosomal cargo. Plays a key role in innate and adaptive immune response triggered by unmethylated cytidine-phosphate-guanosine (CpG) dinucleotides from pathogens, and mediated by the nucleotide-sensing receptor TLR9. It is necessary for the translocation of CpG dinucleotides from early endosomes to late endosomes and lysosomes, where TLR9 is located. In Homo sapiens (Human), this protein is Ectopic P granules protein 5 homolog (EPG5).